The chain runs to 162 residues: Cytochrome c-type biogenesis protein CcmE (162 aa).

The Cytoplasmic portion of the chain corresponds to 1–8; sequence MNPRRKKR. The chain crosses the membrane as a helical; Signal-anchor for type II membrane protein span at residues 9-29; that stretch reads LTLAVALIGGVAAITSLLLYA. The Periplasmic segment spans residues 30 to 162; the sequence is LNSNLNLFYT…YSQQKAPDTK (133 aa). The heme site is built by His-131 and Tyr-135. Positions 142–162 are disordered; the sequence is EAMGQKHEKLDYSQQKAPDTK. Over residues 153 to 162 the composition is skewed to polar residues; the sequence is YSQQKAPDTK.

It belongs to the CcmE/CycJ family.

It is found in the cell inner membrane. Heme chaperone required for the biogenesis of c-type cytochromes. Transiently binds heme delivered by CcmC and transfers the heme to apo-cytochromes in a process facilitated by CcmF and CcmH. The chain is Cytochrome c-type biogenesis protein CcmE from Shewanella baltica (strain OS223).